The following is a 272-amino-acid chain: Ribonuclease HII (272 aa).

The region spanning 30–221 (GPVAGVDEVG…VRRAAEATGV (192 aa)) is the RNase H type-2 domain. A divalent metal cation is bound by residues D36, E37, and D130.

Belongs to the RNase HII family. Mn(2+) is required as a cofactor. It depends on Mg(2+) as a cofactor.

It localises to the cytoplasm. It catalyses the reaction Endonucleolytic cleavage to 5'-phosphomonoester.. Its function is as follows. Endonuclease that specifically degrades the RNA of RNA-DNA hybrids. This chain is Ribonuclease HII, found in Mycolicibacterium smegmatis (strain ATCC 700084 / mc(2)155) (Mycobacterium smegmatis).